The primary structure comprises 122 residues: Cofilin-5 (122 aa).

Residues 3–122 (SRIIEIDPNC…VKDLIQLSNL (120 aa)) form the ADF-H domain.

The protein belongs to the actin-binding proteins ADF family.

The protein resides in the cytoplasm. It localises to the cytoskeleton. In terms of biological role, controls actin polymerization and depolymerization. The polypeptide is Cofilin-5 (cofF) (Dictyostelium discoideum (Social amoeba)).